Consider the following 139-residue polypeptide: Hydrogenase maturation factor HypA (139 aa).

His2 contributes to the Ni(2+) binding site. Zn(2+) is bound by residues Cys73, Cys76, Cys110, and Cys113.

This sequence belongs to the HypA/HybF family.

Its function is as follows. Involved in the maturation of [NiFe] hydrogenases. Required for nickel insertion into the metal center of the hydrogenase. This is Hydrogenase maturation factor HypA from Pyrococcus abyssi (strain GE5 / Orsay).